Reading from the N-terminus, the 325-residue chain is tRNA pseudouridine synthase B (325 aa).

The active-site Nucleophile is the aspartate 49.

Belongs to the pseudouridine synthase TruB family. Type 1 subfamily.

The catalysed reaction is uridine(55) in tRNA = pseudouridine(55) in tRNA. Its function is as follows. Responsible for synthesis of pseudouridine from uracil-55 in the psi GC loop of transfer RNAs. The chain is tRNA pseudouridine synthase B from Mesorhizobium japonicum (strain LMG 29417 / CECT 9101 / MAFF 303099) (Mesorhizobium loti (strain MAFF 303099)).